Here is a 395-residue protein sequence, read N- to C-terminus: Small ribosomal subunit protein mS31 (395 aa).

The transit peptide at 1–65 (MFPRVSTFLP…IQRYFGTNSV (65 aa)) directs the protein to the mitochondrion. Disordered regions lie at residues 70–97 (KDKQ…NTKK) and 175–196 (SELL…DAKR). Residues 183–196 (QHEEESRAQRDAKR) show a composition bias toward basic and acidic residues.

This sequence belongs to the mitochondrion-specific ribosomal protein mS31 family. Component of the mitochondrial small ribosomal subunit (mt-SSU). Mature mammalian 55S mitochondrial ribosomes consist of a small (28S) and a large (39S) subunit. The 28S small subunit contains a 12S ribosomal RNA (12S mt-rRNA) and 30 different proteins. The 39S large subunit contains a 16S rRNA (16S mt-rRNA), a copy of mitochondrial valine transfer RNA (mt-tRNA(Val)), which plays an integral structural role, and 52 different proteins.

It localises to the mitochondrion. The chain is Small ribosomal subunit protein mS31 (MRPS31) from Homo sapiens (Human).